The following is a 222-amino-acid chain: Triosephosphate isomerase (222 aa).

Residue 9–11 (NFK) coordinates substrate. Catalysis depends on histidine 93, which acts as the Electrophile. The active-site Proton acceptor is glutamate 141. Residues isoleucine 146, glycine 181, and 202–203 (AS) contribute to the substrate site.

The protein belongs to the triosephosphate isomerase family. As to quaternary structure, homotetramer; dimer of dimers.

The protein localises to the cytoplasm. It catalyses the reaction D-glyceraldehyde 3-phosphate = dihydroxyacetone phosphate. It participates in carbohydrate biosynthesis; gluconeogenesis. Its pathway is carbohydrate degradation; glycolysis; D-glyceraldehyde 3-phosphate from glycerone phosphate: step 1/1. Functionally, involved in the gluconeogenesis. Catalyzes stereospecifically the conversion of dihydroxyacetone phosphate (DHAP) to D-glyceraldehyde-3-phosphate (G3P). The protein is Triosephosphate isomerase of Methanothermus fervidus (strain ATCC 43054 / DSM 2088 / JCM 10308 / V24 S).